Consider the following 605-residue polypeptide: Elongation factor 4 (605 aa).

Residues 11-193 enclose the tr-type G domain; that stretch reads EKIRNFSIIA…QIVEKVPAPT (183 aa). GTP is bound by residues 23 to 28 and 140 to 143; these read DHGKST and NKID.

The protein belongs to the TRAFAC class translation factor GTPase superfamily. Classic translation factor GTPase family. LepA subfamily.

Its subcellular location is the cell membrane. It catalyses the reaction GTP + H2O = GDP + phosphate + H(+). Its function is as follows. Required for accurate and efficient protein synthesis under certain stress conditions. May act as a fidelity factor of the translation reaction, by catalyzing a one-codon backward translocation of tRNAs on improperly translocated ribosomes. Back-translocation proceeds from a post-translocation (POST) complex to a pre-translocation (PRE) complex, thus giving elongation factor G a second chance to translocate the tRNAs correctly. Binds to ribosomes in a GTP-dependent manner. The protein is Elongation factor 4 of Streptococcus pyogenes serotype M4 (strain MGAS10750).